The following is a 483-amino-acid chain: Glycogen synthase (483 aa).

Position 15 (K15) interacts with ADP-alpha-D-glucose.

The protein belongs to the glycosyltransferase 1 family. Bacterial/plant glycogen synthase subfamily.

The catalysed reaction is [(1-&gt;4)-alpha-D-glucosyl](n) + ADP-alpha-D-glucose = [(1-&gt;4)-alpha-D-glucosyl](n+1) + ADP + H(+). Its pathway is glycan biosynthesis; glycogen biosynthesis. Synthesizes alpha-1,4-glucan chains using ADP-glucose. The sequence is that of Glycogen synthase from Exiguobacterium sibiricum (strain DSM 17290 / CCUG 55495 / CIP 109462 / JCM 13490 / 255-15).